Here is a 693-residue protein sequence, read N- to C-terminus: Elongation factor G (693 aa).

Residues 8–282 (EKTRNIGIMA…AVIDYLPSPL (275 aa)) enclose the tr-type G domain. Residues 17-24 (AHVDAGKT), 81-85 (DTPGH), and 135-138 (NKMD) contribute to the GTP site.

This sequence belongs to the TRAFAC class translation factor GTPase superfamily. Classic translation factor GTPase family. EF-G/EF-2 subfamily.

The protein resides in the cytoplasm. Catalyzes the GTP-dependent ribosomal translocation step during translation elongation. During this step, the ribosome changes from the pre-translocational (PRE) to the post-translocational (POST) state as the newly formed A-site-bound peptidyl-tRNA and P-site-bound deacylated tRNA move to the P and E sites, respectively. Catalyzes the coordinated movement of the two tRNA molecules, the mRNA and conformational changes in the ribosome. The chain is Elongation factor G from Streptococcus pneumoniae (strain ATCC 700669 / Spain 23F-1).